Here is an 860-residue protein sequence, read N- to C-terminus: Leucine--tRNA ligase (860 aa).

A 'HIGH' region motif is present at residues 42-52; it reads PYPSGRLHMGH. The 'KMSKS' region signature appears at 619-623; the sequence is KMSKS. Lys-622 contributes to the ATP binding site.

It belongs to the class-I aminoacyl-tRNA synthetase family.

It localises to the cytoplasm. It catalyses the reaction tRNA(Leu) + L-leucine + ATP = L-leucyl-tRNA(Leu) + AMP + diphosphate. The protein is Leucine--tRNA ligase of Yersinia pestis bv. Antiqua (strain Angola).